Consider the following 337-residue polypeptide: Glucan endo-1,3-beta-glucosidase, basic isoform 1 (337 aa).

E94 (proton donor) is an active-site residue. Catalysis depends on E239, which acts as the Nucleophile. The propeptide at 315–337 (VSERVWDISAETNSTASSLISEM) is removed in mature form. The N-linked (GlcNAc...) asparagine glycan is linked to N327.

Belongs to the glycosyl hydrolase 17 family.

It is found in the vacuole. The enzyme catalyses Hydrolysis of (1-&gt;3)-beta-D-glucosidic linkages in (1-&gt;3)-beta-D-glucans.. Functionally, is thought to be an important plant defense-related product against fungal pathogens. The polypeptide is Glucan endo-1,3-beta-glucosidase, basic isoform 1 (GLUB1) (Solanum tuberosum (Potato)).